The chain runs to 644 residues: MQGFLRSLFFGVKKIPKRFAPLVEKGVLKEALQSNKDRYLLKEGFDIGKIERVKNKAFFISLAKNYPKDPLIKNLPPSFKTDALILCQIECSKKRPIAFFKAALLNADHAMIAYLAKEKNQIVAIPFKEPFKKPISLKHSQRSLLELPRHCVVKIDLKKREISEILGALEDPLIDENLSLSLFDRIKDFSKDCLDLAQYYAQLKASDFKDRINYSHIPFITIDPKDAKDFDDAIFYDKEKNTLFVAVADVSEFVPKHSSLDKEARIRGFSVYFPNSVYPMLPLSLSQGACSLKAFEKRLALVYEIPLDNLKNARLSQGVIEVRANCAYEEINHFLNTQQSSLGKDLQQSLLGFLEVALKLKKERLKKGFNFNSFENKLYLNEEGRIEKIETEKESGAHTLIEEAMLLANQSSARLLDGHFHNRGIYRTHKEPSLEQQKRLYDKLFDYEIVRPKNMGFFPFLEHALKISQEKSIEREVSRLIIKSQNLALYSPMQESHFGLGFASYTHFTSPIRRYSDLALHRLLKELLFHQAKGCSYLLEETPELCAELNALQKKAALIERDFIKRKFARLALEFLEKEFLGVVLEAKDWVVVGLKEFIGLKVLIKTNKVFKPLEKVRIKITHADLILGQVRGEITERIKEHVS.

Residues 211–529 (RINYSHIPFI…LHRLLKELLF (319 aa)) enclose the RNB domain. Residues 573 to 644 (LEFLEKEFLG…ITERIKEHVS (72 aa)) enclose the S1 motif domain.

The protein belongs to the RNR ribonuclease family. RNase R subfamily.

The protein resides in the cytoplasm. The catalysed reaction is Exonucleolytic cleavage in the 3'- to 5'-direction to yield nucleoside 5'-phosphates.. Its function is as follows. 3'-5' exoribonuclease that releases 5'-nucleoside monophosphates and is involved in maturation of structured RNAs. The protein is Ribonuclease R of Helicobacter pylori (strain J99 / ATCC 700824) (Campylobacter pylori J99).